A 2200-amino-acid polypeptide reads, in one-letter code: Non-reducing polyketide synthase tpeB (2200 aa).

Residues 16–255 (FFGDQTVDTL…MDLPLGTPAH (240 aa)) enclose the Starter acyltransferase (SAT) domain. The region spanning 382–815 (SNMIAIVGQS…GGNNCVLLEE (434 aa)) is the Ketosynthase family 3 (KS3) domain. Active-site for beta-ketoacyl synthase activity residues include cysteine 554, histidine 690, and histidine 729. In terms of domain architecture, Malonyl-CoA:ACP transacylase (MAT) spans 914–1202 (VFAFTGQGSQ…VLNSFIKATL (289 aa)). Residues 1296–1621 (TASLQRVREE…TKRILTTILG (326 aa)) form a product template (PT) domain region. The tract at residues 1300-1433 (QRVREERIQG…CKIRFESKAD (134 aa)) is N-terminal hotdog fold. The 318-residue stretch at 1300 to 1617 (QRVREERIQG…FQRLTKRILT (318 aa)) folds into the PKS/mFAS DH domain. Histidine 1332 acts as the Proton acceptor; for dehydratase activity in catalysis. Residues 1462–1617 (NGHKLPKPVV…FQRLTKRILT (156 aa)) form a C-terminal hotdog fold region. Aspartate 1522 functions as the Proton donor; for dehydratase activity in the catalytic mechanism. The segment at 1625-1652 (DHHNSNEVRNGNATTTHTNPPAHATTQS) is disordered. A compositionally biased stretch (low complexity) spans 1636–1650 (NATTTHTNPPAHATT). Carrier domains lie at 1671–1748 (TVGE…AELP) and 1791–1865 (ANYA…GPNT). O-(pantetheine 4'-phosphoryl)serine is present on residues serine 1708 and serine 1825. A thioesterase (TE) domain region spans residues 1931-2173 (MFFLPDGTGY…TVPCDHLSIM (243 aa)).

The cofactor is pantetheine 4'-phosphate.

It participates in secondary metabolite biosynthesis. Non-reducing polyketide synthase; part of the gene cluster that mediates the biosynthesis of polyesters containing 2,4-dihydroxy-6-(2-hydroxypropyl)benzoate and 3-hydroxybutyrate moieties, such as talapolyester G, 15G256beta and 15G256beta-2; as well as to oxidized derivatives such as 15G256alpha. The biosynthesis of the polyesters probably starts with the formation of the diketide 3-hydroxybutyryl-S-ACP catalyzed by the partially reducing polyketide synthase tpeA. The acceptance of 3-hydroxybutyryl by the non-reducing polyketide synthase tpeB would initiate further elongation and cyclization, catalyzed by KS and PT, respectively, to form 2,4-dihydroxy-6-(2-hydroxyn-propyl)benzoyl-S-ACP intermediate. The TE domain could catalyze lactonization at this step to yield 6-hydroxymellein as a derailment product. The polyesterification process maybe occurs when additional molecules of 3-hydroxybutyryl are transferred to tpeB. Following the first esterification step, an intramolecular cyclization catalyzed by the TE domain of tpeB would give talarodioxadione 1, whereas the ethyl esterification of talapolyester G perhaps happens spontaneously. Further oxidation by the cytochrome P450 monooxygenase tpeC then leads to the formation of oxidized derivatives. The chain is Non-reducing polyketide synthase tpeB from Talaromyces stipitatus (strain ATCC 10500 / CBS 375.48 / QM 6759 / NRRL 1006) (Penicillium stipitatum).